A 2599-amino-acid polypeptide reads, in one-letter code: Non-reducing polyketide synthase azaA (2599 aa).

The N-terminal acylcarrier protein transacylase domain (SAT) stretch occupies residues 95–231 (PNILLSPMVV…AARSISSLQQ (137 aa)). Residue Cys-132 is the Nucleophile; for transacylase activity of the active site. The Proton donor/acceptor; for transacylase activity role is filled by His-250. The Ketosynthase family 3 (KS3) domain maps to 372-790 (PNEIAVIGMS…GSNASMVVAQ (419 aa)). Residues Cys-539, His-674, and His-713 each act as for beta-ketoacyl synthase activity in the active site. Residues 902–1193 (FGGQISNYVG…ITSMASRALG (292 aa)) are malonyl-CoA:ACP transacylase (MAT) domain. Positions 1282 to 1413 (PKTLWSLIEA…GKLAFLSGQD (132 aa)) are N-terminal hotdog fold. The PKS/mFAS DH domain occupies 1282 to 1591 (PKTLWSLIEA…YHKVAKASMS (310 aa)). The tract at residues 1310 to 1589 (LVSGHVIANT…INYHKVAKAS (280 aa)) is product template (PT) domain. His-1314 (proton acceptor; for dehydratase activity) is an active-site residue. The C-terminal hotdog fold stretch occupies residues 1443-1591 (ADDIIQGRNI…YHKVAKASMS (149 aa)). Asp-1499 functions as the Proton donor; for dehydratase activity in the catalytic mechanism. Positions 1601–1652 (EAAPSSSTRAHPTSSSSPRLPGPFVPEDKSQNETQTAGTNAVAKKKSEKSAQ) are disordered. Residues 1602–1619 (AAPSSSTRAHPTSSSSPR) are compositionally biased toward low complexity. Residues 1653–1727 (QNVLDKTRAL…GLVEYVQSAV (75 aa)) enclose the Carrier domain. Residue Ser-1687 is modified to O-(pantetheine 4'-phosphoryl)serine. The tract at residues 1749–1779 (NLAASPSSSSSSTNLTEDSSLDPTETTTNIS) is disordered. Low complexity predominate over residues 1750 to 1766 (LAASPSSSSSSTNLTED). Residues 1769 to 1779 (LDPTETTTNIS) show a composition bias toward polar residues. The segment at 1952 to 2140 (DSLLNKLSYR…VGYGQVDWTD (189 aa)) is methyltransferase domain. An NADPH-binding (R) domain region spans residues 2222–2467 (ITGATGSLGV…LCWTPVNDVA (246 aa)).

Pantetheine 4'-phosphate serves as cofactor.

It participates in secondary metabolite biosynthesis. In terms of biological role, non-reducing polyketide synthase; part of the gene cluster that mediates the biosynthesis of azaphilones, a class of fungal metabolites characterized by a highly oxygenated pyrano-quinone bicyclic core and exhibiting a broad range of bioactivities. In the first step, the non-reducing polyketide synthase azaA forms the hexaketide precursor from successive condensations of five malonyl-CoA units, presumably with a simple acetyl-CoA starter unit. The reactive polyketide chain then undergoes a PT-mediated C2-C7 cyclization to afford the aromatic ring and is eventually released as an aldehyde through the R-domain. The putative ketoreductase azaE is proposed to catalyze the reduction of the terminal ketone resulting in the early culture product FK17-P2a. The monooxygenase azaH was demonstrated to be the only enzyme required to convert FK17-P2a to azanigerone E. AzaH first hydroxylates the benzaldehyde intermediate FK17-P2a at C4, which triggers the formation of the pyran-ring to afford azanigerone E. In parallel, the 2,4-dimethylhexanoyl chain is synthesized by the HR-PKS azaB and is proposed to be transferred to the C4-hydroxyl of azanigerone E by the acyltransferase azaD directly from the ACP domain of azaB. Alternatively, the 2,4-dimethyl-hexanoyl chain may be offloaded from the HR-PKS as a carboxylic acid and converted to an acyl-CoA by azaF. The resulting acyl-CoA molecule could then be taken up as a substrate by AzaD to form azanigerone B. To yield the carboxylic acid substituent in azanigerone A, the hydroxypropyl side chain of azanigerone B would need to undergo a C-C oxidative cleavage catalyzed by cytochrome P450 AzaI. AzaI is proposed to act on a vicinal diol that leads to a C-C bond scission either through an alkoxyradical intermediate or a peroxy complex. In the biosynthesis of azanigerone A, azanigerone B first undergoes hydroxylation at C10, possibly catalyzed by one of the two FAD-dependent monooxygenases encoded in the cluster, azaG or azaL, resulting in the vicinal diol azanigerone C. Oxidative cleavage of azanigerone C by azaI would yield the corresponding aldehyde derivative of azanigerone A. Finally, the dehydrogenase azaJ is proposed to convert the aldehyde functional group into the carboxylic acid, completing the conversion from azanigerone B to azanigerone A. Alternatively, the oxidation of aldehyde to carboxylic acid may be catalyzed by the same P450 enzyme azaI via consecutive oxidation or by endogenous alcohol dehydrogenase. The protein is Non-reducing polyketide synthase azaA of Aspergillus niger (strain ATCC 1015 / CBS 113.46 / FGSC A1144 / LSHB Ac4 / NCTC 3858a / NRRL 328 / USDA 3528.7).